The chain runs to 107 residues: Heme-degrading monooxygenase (107 aa).

The ABM domain occupies 2 to 94; sequence IIVTNTTKIT…YILDNKIAYY (93 aa). N6 lines the Fe cation pocket. Residue H76 participates in heme binding.

This sequence belongs to the antibiotic biosynthesis monooxygenase family. Heme-degrading monooxygenase IsdG subfamily. Homodimer.

It localises to the cytoplasm. It catalyses the reaction heme b + 3 reduced [NADPH--hemoprotein reductase] + 3 O2 = biliverdin IXalpha + CO + Fe(2+) + 3 oxidized [NADPH--hemoprotein reductase] + 3 H2O + H(+). In terms of biological role, allows bacterial pathogens to use the host heme as an iron source. Catalyzes the oxidative degradation of the heme macrocyclic porphyrin ring to the biliverdin in the presence of a suitable electron donor such as ascorbate or NADPH--cytochrome P450 reductase, with subsequent release of free iron. The sequence is that of Heme-degrading monooxygenase from Bacillus mycoides (strain KBAB4) (Bacillus weihenstephanensis).